A 361-amino-acid chain; its full sequence is MEEISHHFGVVGASGVHGGHQHQHHHHPWGSSLSAIVAPPPPPQLQQQQTQAGGMAHTPLTLNTAAAAVGNPVLQLANGSLLDACGKAKEASASASYAADVEAIKAKIISHPHYSSLLAAYLDCQKVGAPPEVAARLTAVAQDLELRQRTALGVLGAATEPELDQFMEAYHEMLVKYREELTRPLQEAMEFLRRVETQLNTLSISGRSLRNILSSGSSEEDQEGSGGETELPEIDAHGVDQELKHHLLKKYSGYLSSLKQELSKKKKKGKLPKDARQQLLNWWELHYKWPYPSESQKVALAESTGLDLKQINNWFINQRKRHWKPSDEMQFVMMDGYHPTNAAAFYMDGHFINDGGLYRLG.

The tract at residues 11-48 (VGASGVHGGHQHQHHHHPWGSSLSAIVAPPPPPQLQQQ) is disordered. Over residues 19-28 (GHQHQHHHHP) the composition is skewed to basic residues. One can recognise an ELK domain in the interval 242–262 (ELKHHLLKKYSGYLSSLKQEL). A DNA-binding region (homeobox; TALE-type) is located at residues 263–326 (SKKKKKGKLP…NQRKRHWKPS (64 aa)).

It belongs to the TALE/KNOX homeobox family. Interacts with FTIP7. Expressed predominantly in shoot apices. Also found to a lesser extent in glumes.

Its subcellular location is the nucleus. The protein localises to the cytoplasm. Functionally, transcription factor that regulates genes involved in development. May be involved in shoot formation during embryogenesis. Overexpression in transgenic plants causes altered leaf morphology. Regulates anther dehiscence via direct repression of the auxin biosynthetic gene YUCCA4. Binds to the DNA sequence 5'-TGAC-3' in the promoter of the YUCCA4 gene and represses its activity during anther development. Reduction of auxin levels at late stage of anther development, after meiosis of microspore mother cells, is necessary for normal anther dehiscence and seed setting. This is Homeobox protein knotted-1-like 6 (OSH1) from Oryza sativa subsp. japonica (Rice).